Reading from the N-terminus, the 388-residue chain is Succinate--CoA ligase [ADP-forming] subunit beta (388 aa).

The ATP-grasp domain maps to K9–K245. ATP contacts are provided by residues K46, G53–G55, E100, Y103, and E108. N200 and D214 together coordinate Mg(2+). Residues N265 and G322–V324 contribute to the substrate site.

This sequence belongs to the succinate/malate CoA ligase beta subunit family. As to quaternary structure, heterotetramer of two alpha and two beta subunits. The cofactor is Mg(2+).

It carries out the reaction succinate + ATP + CoA = succinyl-CoA + ADP + phosphate. It catalyses the reaction GTP + succinate + CoA = succinyl-CoA + GDP + phosphate. Its pathway is carbohydrate metabolism; tricarboxylic acid cycle; succinate from succinyl-CoA (ligase route): step 1/1. Its function is as follows. Succinyl-CoA synthetase functions in the citric acid cycle (TCA), coupling the hydrolysis of succinyl-CoA to the synthesis of either ATP or GTP and thus represents the only step of substrate-level phosphorylation in the TCA. The beta subunit provides nucleotide specificity of the enzyme and binds the substrate succinate, while the binding sites for coenzyme A and phosphate are found in the alpha subunit. The polypeptide is Succinate--CoA ligase [ADP-forming] subunit beta (Neisseria meningitidis serogroup B (strain ATCC BAA-335 / MC58)).